The primary structure comprises 308 residues: Tetraacyldisaccharide 4'-kinase (308 aa).

ATP is bound at residue 63–70 (SFGGNGKT).

The protein belongs to the LpxK family.

The enzyme catalyses a lipid A disaccharide + ATP = a lipid IVA + ADP + H(+). It functions in the pathway glycolipid biosynthesis; lipid IV(A) biosynthesis; lipid IV(A) from (3R)-3-hydroxytetradecanoyl-[acyl-carrier-protein] and UDP-N-acetyl-alpha-D-glucosamine: step 6/6. Its function is as follows. Transfers the gamma-phosphate of ATP to the 4'-position of a tetraacyldisaccharide 1-phosphate intermediate (termed DS-1-P) to form tetraacyldisaccharide 1,4'-bis-phosphate (lipid IVA). The sequence is that of Tetraacyldisaccharide 4'-kinase from Campylobacter jejuni subsp. doylei (strain ATCC BAA-1458 / RM4099 / 269.97).